The chain runs to 181 residues: ATP-dependent protease subunit HslV (181 aa).

Threonine 7 is a catalytic residue. Alanine 166, cysteine 169, and threonine 172 together coordinate Na(+).

This sequence belongs to the peptidase T1B family. HslV subfamily. As to quaternary structure, a double ring-shaped homohexamer of HslV is capped on each side by a ring-shaped HslU homohexamer. The assembly of the HslU/HslV complex is dependent on binding of ATP.

It localises to the cytoplasm. It catalyses the reaction ATP-dependent cleavage of peptide bonds with broad specificity.. Allosterically activated by HslU binding. Functionally, protease subunit of a proteasome-like degradation complex believed to be a general protein degrading machinery. The protein is ATP-dependent protease subunit HslV of Anaeromyxobacter dehalogenans (strain 2CP-1 / ATCC BAA-258).